Consider the following 397-residue polypeptide: Ubiquitin-like modifier-activating enzyme 5 (397 aa).

Residues Gly-76, Asp-97, Lys-120, Asn-143, and Asn-177 each contribute to the ATP site. 2 residues coordinate Zn(2+): Cys-219 and Cys-222. Residue Cys-243 is the Glycyl thioester intermediate of the active site. Zn(2+) contacts are provided by Cys-296 and Cys-301. A disordered region spans residues 343 to 384 (PSDAPTDLSQSTDVGQGLRLAYEAPEKSSAEATQAATAPVDD).

This sequence belongs to the ubiquitin-activating E1 family. UBA5 subfamily.

In terms of biological role, E1-like enzyme which activates UFM1. The polypeptide is Ubiquitin-like modifier-activating enzyme 5 (Drosophila pseudoobscura pseudoobscura (Fruit fly)).